The chain runs to 229 residues: Endonuclease V (229 aa).

The Mg(2+) site is built by D46 and D114.

Belongs to the endonuclease V family. Mg(2+) is required as a cofactor.

It is found in the cytoplasm. The catalysed reaction is Endonucleolytic cleavage at apurinic or apyrimidinic sites to products with a 5'-phosphate.. In terms of biological role, DNA repair enzyme involved in the repair of deaminated bases. Selectively cleaves double-stranded DNA at the second phosphodiester bond 3' to a deoxyinosine leaving behind the intact lesion on the nicked DNA. The sequence is that of Endonuclease V from Streptomyces avermitilis (strain ATCC 31267 / DSM 46492 / JCM 5070 / NBRC 14893 / NCIMB 12804 / NRRL 8165 / MA-4680).